A 511-amino-acid polypeptide reads, in one-letter code: Cytochrome P450 monooxygenase roqR (511 aa).

Positions Met-1–Ala-23 are cleaved as a signal peptide. Residues Asn-364, Asn-373, and Asn-383 are each glycosylated (N-linked (GlcNAc...) asparagine). Cys-455 lines the heme pocket.

This sequence belongs to the cytochrome P450 family. The cofactor is heme.

The protein operates within alkaloid biosynthesis. Cytochrome P450 monooxygenase; part of the gene cluster that mediates the biosynthesis of the mycotoxins roquefortine C and meleagrin. The first stage is catalyzed by the dipeptide synthase roqA which condenses histidine and tryptophan to produce histidyltryptophanyldiketopiperazine (HTD). HTD is then converted to roquefortine C through two possible pathways. In the first pathway, prenyltransferase roqD transforms HTD to the intermediate roquefortine D, which is in turn converted to roquefortine C by the cytochrome P450 monooxygenase roqR. In the second pathway, HTD is first converted to the intermediate dehydrohistidyltryptophanyldi-ketopiperazine (DHTD) by roqR which is then prenylated by roqD to form roquefortine C. Roquefortine C can be further transformed to meleagrin via three more reactions including oxydation to glandicolin A by roqM, which is further reduced to glandicoline B by roqO. Finally, glandicoline B is converted to meleagrin by the glandicoline B O-methyltransferase roqN. More studies identified further branching and additional metabolites produced by the roquefortine/meleagrin cluster, including roquefortine F, roquefortine L, roquefortine M, roquefortine N and neoxaline. This chain is Cytochrome P450 monooxygenase roqR, found in Penicillium rubens (strain ATCC 28089 / DSM 1075 / NRRL 1951 / Wisconsin 54-1255) (Penicillium chrysogenum).